We begin with the raw amino-acid sequence, 399 residues long: Elongation factor Tu (399 aa).

Residues 10 to 209 (KPHVNIGTIG…AVDEYIPTPE (200 aa)) form the tr-type G domain. Residues 19 to 26 (GHVDHGKT) form a G1 region. A GTP-binding site is contributed by 19–26 (GHVDHGKT). Threonine 26 contacts Mg(2+). Residues 60-64 (GITIN) form a G2 region. The G3 stretch occupies residues 81–84 (DCPG). GTP contacts are provided by residues 81-85 (DCPGH) and 136-139 (NKMD). The segment at 136 to 139 (NKMD) is G4. A G5 region spans residues 174–176 (SAL).

Belongs to the TRAFAC class translation factor GTPase superfamily. Classic translation factor GTPase family. EF-Tu/EF-1A subfamily. As to quaternary structure, monomer.

It is found in the cytoplasm. The catalysed reaction is GTP + H2O = GDP + phosphate + H(+). Functionally, GTP hydrolase that promotes the GTP-dependent binding of aminoacyl-tRNA to the A-site of ribosomes during protein biosynthesis. In Nautilia profundicola (strain ATCC BAA-1463 / DSM 18972 / AmH), this protein is Elongation factor Tu.